A 545-amino-acid polypeptide reads, in one-letter code: Membrane protein insertase YidC (545 aa).

A run of 4 helical transmembrane segments spans residues 350–370 (IIGNWGWAIIVLTIIVKAVLY), 424–444 (LPMLLQIPVFIGLYWALFASV), 461–481 (ADPYYILPIIMAATMFAQTYL), and 498–518 (PLVFSVMFFFFPAGLVLYWVI).

This sequence belongs to the OXA1/ALB3/YidC family. Type 1 subfamily. In terms of assembly, interacts with the Sec translocase complex via SecD. Specifically interacts with transmembrane segments of nascent integral membrane proteins during membrane integration.

The protein localises to the cell inner membrane. In terms of biological role, required for the insertion and/or proper folding and/or complex formation of integral membrane proteins into the membrane. Involved in integration of membrane proteins that insert both dependently and independently of the Sec translocase complex, as well as at least some lipoproteins. Aids folding of multispanning membrane proteins. The sequence is that of Membrane protein insertase YidC from Neisseria meningitidis serogroup A / serotype 4A (strain DSM 15465 / Z2491).